The sequence spans 395 residues: Protein TAMALIN (395 aa).

Positions 1–52 (MTLRRLRKLQQKEEAAATPDPAARTPDSEVAPAAPVPTPGPPAAAATPGPPA) are disordered. Low complexity predominate over residues 16-33 (AATPDPAARTPDSEVAPA). Residue T77 is modified to Phosphothreonine. At S94 the chain carries Phosphoserine. Residues 101–190 (VLTLEKEDNQ…VLRLETLYGT (90 aa)) form the PDZ domain. Residues 181 to 258 (VLRLETLYGT…GAGLLPGSLP (78 aa)) are interaction with PSCD3. Y237 carries the phosphotyrosine modification. An Omega-N-methylarginine modification is found at R270. Residues 293 to 349 (SEPPALPPPPPPARAFGPGPAETPAVGPGPGPRAALSRSASVRCAGPGGGGGGGAPG) are disordered. Pro residues predominate over residues 296–305 (PALPPPPPPA). The span at 338-348 (GPGGGGGGGAP) shows a compositional bias: gly residues. S387 carries the post-translational modification Phosphoserine.

Heteromer. Composed of TAMALIN, CYTH2 and at least one GRM1. Also interacts with CYTH3, GRM2, GRM3 and GRM5.

Its subcellular location is the cytoplasm. It localises to the perinuclear region. The protein resides in the cell membrane. The protein localises to the postsynaptic cell membrane. In terms of biological role, plays a role in intracellular trafficking and contributes to the macromolecular organization of group 1 metabotropic glutamate receptors (mGluRs) at synapses. The chain is Protein TAMALIN from Homo sapiens (Human).